An 878-amino-acid chain; its full sequence is Alanine--tRNA ligase (878 aa).

Zn(2+) is bound by residues histidine 566, histidine 570, cysteine 668, and histidine 672.

Belongs to the class-II aminoacyl-tRNA synthetase family. It depends on Zn(2+) as a cofactor.

The protein localises to the cytoplasm. The catalysed reaction is tRNA(Ala) + L-alanine + ATP = L-alanyl-tRNA(Ala) + AMP + diphosphate. Functionally, catalyzes the attachment of alanine to tRNA(Ala) in a two-step reaction: alanine is first activated by ATP to form Ala-AMP and then transferred to the acceptor end of tRNA(Ala). Also edits incorrectly charged Ser-tRNA(Ala) and Gly-tRNA(Ala) via its editing domain. This Bacillus subtilis (strain 168) protein is Alanine--tRNA ligase.